Consider the following 267-residue polypeptide: Glutamate racemase (267 aa).

Residues 10-11 (DS) and 42-43 (YG) each bind substrate. The Proton donor/acceptor role is filled by C73. Substrate is bound at residue 74–75 (NT). C183 acts as the Proton donor/acceptor in catalysis. Substrate is bound at residue 184–185 (TH).

The protein belongs to the aspartate/glutamate racemases family.

The enzyme catalyses L-glutamate = D-glutamate. Its pathway is cell wall biogenesis; peptidoglycan biosynthesis. Its function is as follows. Provides the (R)-glutamate required for cell wall biosynthesis. The sequence is that of Glutamate racemase from Limosilactobacillus reuteri (strain DSM 20016) (Lactobacillus reuteri).